An 82-amino-acid polypeptide reads, in one-letter code: Large ribosomal subunit protein uL23 (82 aa).

The protein belongs to the universal ribosomal protein uL23 family. In terms of assembly, part of the 50S ribosomal subunit. Contacts protein L29.

Its function is as follows. Binds to 23S rRNA. One of the proteins that surrounds the polypeptide exit tunnel on the outside of the ribosome. In Picrophilus torridus (strain ATCC 700027 / DSM 9790 / JCM 10055 / NBRC 100828 / KAW 2/3), this protein is Large ribosomal subunit protein uL23.